The chain runs to 432 residues: Trigger factor (432 aa).

A PPIase FKBP-type domain is found at 161-246 (EDRVTIDFTG…LKKVEERELP (86 aa)).

It belongs to the FKBP-type PPIase family. Tig subfamily. As to quaternary structure, homodimer and monomer. In vivo most of the ribosomes are in complex with monomeric TF. Uncomplexed TF, however, is in a monomer-dimer equilibrium with approximately two thirds of TF existing in a dimeric state.

The protein resides in the cytoplasm. The catalysed reaction is [protein]-peptidylproline (omega=180) = [protein]-peptidylproline (omega=0). Its function is as follows. Involved in protein export. Acts as a chaperone by maintaining the newly synthesized protein in an open conformation. Functions as a peptidyl-prolyl cis-trans isomerase. In Escherichia fergusonii (strain ATCC 35469 / DSM 13698 / CCUG 18766 / IAM 14443 / JCM 21226 / LMG 7866 / NBRC 102419 / NCTC 12128 / CDC 0568-73), this protein is Trigger factor.